A 196-amino-acid polypeptide reads, in one-letter code: Small ribosomal subunit protein uS4c (196 aa).

A disordered region spans residues 22–42; that stretch reads TRKTPKSGSNPKKKFHSGKKE. The 81-residue stretch at 89 to 169 folds into the S4 RNA-binding domain; the sequence is MRLDNILFRL…LPKHLTIDTL (81 aa).

The protein belongs to the universal ribosomal protein uS4 family. Part of the 30S ribosomal subunit. Contacts protein S5. The interaction surface between S4 and S5 is involved in control of translational fidelity.

It is found in the plastid. Its subcellular location is the chloroplast. One of the primary rRNA binding proteins, it binds directly to 16S rRNA where it nucleates assembly of the body of the 30S subunit. In terms of biological role, with S5 and S12 plays an important role in translational accuracy. This Melica altissima (Siberian melic grass) protein is Small ribosomal subunit protein uS4c (rps4).